The chain runs to 314 residues: Homoserine kinase (314 aa).

ATP is bound at residue 96–106 (PIGSGLGSSAC).

The protein belongs to the GHMP kinase family. Homoserine kinase subfamily.

Its subcellular location is the cytoplasm. It carries out the reaction L-homoserine + ATP = O-phospho-L-homoserine + ADP + H(+). Its pathway is amino-acid biosynthesis; L-threonine biosynthesis; L-threonine from L-aspartate: step 4/5. Functionally, catalyzes the ATP-dependent phosphorylation of L-homoserine to L-homoserine phosphate. The sequence is that of Homoserine kinase from Histophilus somni (strain 129Pt) (Haemophilus somnus).